The chain runs to 142 residues: ATP synthase epsilon chain (142 aa).

The protein belongs to the ATPase epsilon chain family. As to quaternary structure, F-type ATPases have 2 components, CF(1) - the catalytic core - and CF(0) - the membrane proton channel. CF(1) has five subunits: alpha(3), beta(3), gamma(1), delta(1), epsilon(1). CF(0) has three main subunits: a, b and c.

Its subcellular location is the cell inner membrane. Its function is as follows. Produces ATP from ADP in the presence of a proton gradient across the membrane. This Shewanella sp. (strain ANA-3) protein is ATP synthase epsilon chain.